A 395-amino-acid polypeptide reads, in one-letter code: Receptor-like cytoplasmic kinase 176 (395 aa).

A disordered region spans residues 1-45 (MGNCWGAKISSESPCRSASSPSGGTSKYASNSSVSAASVPPTPRS). 2 stretches are compositionally biased toward low complexity: residues 10-22 (SSES…SSPS) and 29-39 (ASNSSVSAASV). The Protein kinase domain occupies 70–355 (FRPDSVLGEG…EQVVAVLEQL (286 aa)). ATP-binding positions include 76-84 (LGEGGFGSV) and Lys108. The active-site Proton acceptor is the Asp205. Residues 359 to 395 (KETGANPQLQKKSSSKNAGSNGSKPSSKGKPANARLV) are disordered. Positions 369–395 (KKSSSKNAGSNGSKPSSKGKPANARLV) are enriched in low complexity.

It belongs to the protein kinase superfamily. Ser/Thr protein kinase family. In terms of assembly, interacts with CERK1.

The enzyme catalyses L-seryl-[protein] + ATP = O-phospho-L-seryl-[protein] + ADP + H(+). It carries out the reaction L-threonyl-[protein] + ATP = O-phospho-L-threonyl-[protein] + ADP + H(+). Its function is as follows. Functions downstream of CERK1 in the microbial peptidoglycans (PGNs) and fungal chitin signaling pathways that mediate innate immunity. Participates in the activation of defense genes during response to PGN and chitin. In Oryza sativa subsp. japonica (Rice), this protein is Receptor-like cytoplasmic kinase 176.